Consider the following 194-residue polypeptide: uncharacterized protein (194 aa).

2 disordered regions span residues 52-71 and 86-194; these read KGRT…EKYK and AEAL…DGGS. 3 stretches are compositionally biased toward polar residues: residues 53–63, 98–111, and 119–132; these read GRTTQSAINSE, ALTS…SSTN, and IAHS…TSPA. Positions 133–169 are enriched in basic residues; that stretch reads NRHRRKEKERTRSNHRHGSHRRHEPYRTHLSRHHRHS. Positions 175–194 are enriched in basic and acidic residues; the sequence is SKRDDRYERRREHSPNDGGS.

This is an uncharacterized protein from Schizosaccharomyces pombe (strain 972 / ATCC 24843) (Fission yeast).